The following is a 239-amino-acid chain: RBPJ-interacting and tubulin-associated protein 1 (239 aa).

The short motif at 12 to 24 (LDLSITGHSTALP) is the Nuclear export signal element. Disordered stretches follow at residues 62–97 (APPS…TPRK) and 149–239 (LVQQ…PPWK). The short motif at 93–109 (GTPRKKIQYRVKSRTPS) is the Nuclear localization signal element. The tract at residues 129–158 (WVKKEDTVKIRPLLWSPSPRLVQQSSMQNA) is interaction with RBPJ/RBPSUH. 2 stretches are compositionally biased toward polar residues: residues 149-159 (LVQQSSMQNAK) and 203-221 (RQRQ…SCSG). Residues 158–239 (AKQGPLRAVH…VKMQERPPWK (82 aa)) are interaction with tubulin.

The protein belongs to the RITA family. In terms of assembly, interacts with rbpj/rbpsuh.

The protein localises to the cytoplasm. Its subcellular location is the nucleus. Functionally, tubulin-binding protein that acts as a negative regulator of Notch signaling pathway. Shuttles between the cytoplasm and the nucleus and mediates the nuclear export of rbpj/rbpsuh, thereby preventing the interaction between rbpj/rbpsuh and NICD product of Notch proteins (Notch intracellular domain), leading to down-regulate Notch-mediated transcription. May play a role in neurogenesis. This is RBPJ-interacting and tubulin-associated protein 1 (rita1) from Xenopus laevis (African clawed frog).